The chain runs to 225 residues: Small ribosomal subunit protein uS3 (225 aa).

The KH type-2 domain occupies 16-85 (VYEYLVKETE…TPQIEVKDVK (70 aa)). Positions 200–225 (GENVGTESETDKADEQGREAANTEES) are disordered. A compositionally biased stretch (basic and acidic residues) spans 208 to 217 (ETDKADEQGR).

This sequence belongs to the universal ribosomal protein uS3 family. As to quaternary structure, part of the 30S ribosomal subunit.

Functionally, binds the lower part of the 30S subunit head. This is Small ribosomal subunit protein uS3 from Thermoplasma volcanium (strain ATCC 51530 / DSM 4299 / JCM 9571 / NBRC 15438 / GSS1).